The primary structure comprises 209 residues: dITP/XTP pyrophosphatase (209 aa).

Residue 7-12 participates in substrate binding; sequence TGNKGK. Asp73 serves as the catalytic Proton acceptor. Asp73 serves as a coordination point for Mg(2+). Substrate is bound by residues Ser74, 155 to 158, Lys178, and 183 to 184; these read FGYD and HR.

It belongs to the HAM1 NTPase family. As to quaternary structure, homodimer. It depends on Mg(2+) as a cofactor.

It catalyses the reaction XTP + H2O = XMP + diphosphate + H(+). The catalysed reaction is dITP + H2O = dIMP + diphosphate + H(+). The enzyme catalyses ITP + H2O = IMP + diphosphate + H(+). In terms of biological role, pyrophosphatase that catalyzes the hydrolysis of nucleoside triphosphates to their monophosphate derivatives, with a high preference for the non-canonical purine nucleotides XTP (xanthosine triphosphate), dITP (deoxyinosine triphosphate) and ITP. Seems to function as a house-cleaning enzyme that removes non-canonical purine nucleotides from the nucleotide pool, thus preventing their incorporation into DNA/RNA and avoiding chromosomal lesions. In Sulfurovum sp. (strain NBC37-1), this protein is dITP/XTP pyrophosphatase.